The following is a 612-amino-acid chain: Coagulation factor X-activating enzyme heavy chain (612 aa).

A signal peptide spans 1 to 20 (MMQVLLVTISLAVFPYQGSS). Positions 21–193 (IILESGNVND…KKASQLVATS (173 aa)) are cleaved as a propeptide — or 194. The 195-residue stretch at 201–395 (TFIELVIVVD…YKPKCILNPP (195 aa)) folds into the Peptidase M12B domain. Glu-204 contributes to the Ca(2+) binding site. Asn-259 carries an N-linked (GlcNAc...) asparagine glycan. Asp-286 is a binding site for Ca(2+). 3 disulfides stabilise this stretch: Cys-310–Cys-390, Cys-350–Cys-374, and Cys-352–Cys-357. A Zn(2+)-binding site is contributed by His-335. Residue Glu-336 is part of the active site. Zn(2+)-binding residues include His-339 and His-345. N-linked (GlcNAc...) asparagine glycans are attached at residues Asn-353 and Asn-373. 7 residues coordinate Ca(2+): Cys-390, Asn-393, Ile-405, Asn-408, Glu-412, Glu-415, and Asp-418. The Disintegrin domain occupies 403–489 (PPICGNEIWE…ECPADGFHAN (87 aa)). A disulfide bridge links Cys-461 with Cys-481. Positions 467-469 (ECD) match the D/ECD-tripeptide motif.

Belongs to the venom metalloproteinase (M12B) family. P-III subfamily. P-IIId sub-subfamily. Heterotrimer; disulfide-linked. The heterotrimer consists of 1 heavy chain and 2 light chains (lectins): LC1 and LC2 (AC Q7T045 and AC Q696W1). Requires Zn(2+) as cofactor. In terms of processing, N-glycosylated. Contains 8.0% of hexoses, 2.5% of hexosamines and 2.5% of sialic acids. Expressed by the venom gland.

The protein resides in the secreted. The catalysed reaction is Specifically activates several components of the blood clotting system, including coagulation factor X, coagulation factor IX and protein C by cleavage of Arg-|-Xaa bonds. Has no action on insulin B chain.. Calcium is required for the activity of the heterotrimer. Catalytic subunit of blood coagulation factor X-activating enzyme. Activates coagulation factor X (F10) by cleaving the Arg(234)-Ile(235) bond, activates coagulation factor IX (F9) by cleaving the Arg(226)-Val(227) bond and is also able to activate protein C (PROC). This chain is Coagulation factor X-activating enzyme heavy chain, found in Macrovipera lebetinus (Levantine viper).